The primary structure comprises 102 residues: Beta-defensin 116 (102 aa).

The signal sequence occupies residues 1 to 23 (MSVMKPCLMTIAILMILAQKTPG). 3 cysteine pairs are disulfide-bonded: C40–C67, C47–C61, and C51–C68. The tract at residues 83 to 102 (EDYDSNSNLSVTNSSSYSHI) is disordered. Residues 87–102 (SNSNLSVTNSSSYSHI) show a composition bias toward low complexity.

Belongs to the beta-defensin family.

It localises to the secreted. Functionally, has antibacterial activity. This chain is Beta-defensin 116 (DEFB116), found in Homo sapiens (Human).